The sequence spans 171 residues: Galectin-related protein (171 aa).

The Galectin domain occupies 38–170; it reads PFCGHIKGGM…INGDLQLTKL (133 aa).

Does not bind lactose, and may not bind carbohydrates. The polypeptide is Galectin-related protein (lgalsl) (Xenopus tropicalis (Western clawed frog)).